A 175-amino-acid chain; its full sequence is Adenine phosphoribosyltransferase (175 aa).

It belongs to the purine/pyrimidine phosphoribosyltransferase family. As to quaternary structure, homodimer.

The protein resides in the cytoplasm. It carries out the reaction AMP + diphosphate = 5-phospho-alpha-D-ribose 1-diphosphate + adenine. It participates in purine metabolism; AMP biosynthesis via salvage pathway; AMP from adenine: step 1/1. Its function is as follows. Catalyzes a salvage reaction resulting in the formation of AMP, that is energically less costly than de novo synthesis. In Francisella tularensis subsp. tularensis (strain FSC 198), this protein is Adenine phosphoribosyltransferase.